We begin with the raw amino-acid sequence, 264 residues long: MAISIKTSEDIEKMRVAGRLAAEVLEMIEPYIKPGVTTGELDRICNDYIVNEQHAISACLGYHGYPKSVCISINEVVCHGIPDDAKHLKDGDIVNIDVTVIKDEFHGDTSKMFIVGKPTILGERLCRVTQESLYLGIKMVKPGIRLRTIGAAIQKYAEGEGFSVVREYCGHGIGRGFHEEPQVLHYDADDGGVVLQPGMTFTIEPMLNAGDYRIRTMKDGWTVKTKDRSLSAQYEHTIVVTENGCEILTLRKDDTIPAIITHDE.

Position 79 (H79) interacts with substrate. A divalent metal cation contacts are provided by D97, D108, and H171. H178 contacts substrate. Residues E204 and E235 each coordinate a divalent metal cation.

This sequence belongs to the peptidase M24A family. Methionine aminopeptidase type 1 subfamily. In terms of assembly, monomer. Requires Co(2+) as cofactor. Zn(2+) serves as cofactor. The cofactor is Mn(2+). Fe(2+) is required as a cofactor.

It catalyses the reaction Release of N-terminal amino acids, preferentially methionine, from peptides and arylamides.. In terms of biological role, removes the N-terminal methionine from nascent proteins. The N-terminal methionine is often cleaved when the second residue in the primary sequence is small and uncharged (Met-Ala-, Cys, Gly, Pro, Ser, Thr, or Val). Requires deformylation of the N(alpha)-formylated initiator methionine before it can be hydrolyzed. The chain is Methionine aminopeptidase from Salmonella typhi.